The primary structure comprises 165 residues: Calcium-binding protein H (165 aa).

4 consecutive EF-hand domains span residues 7–42 (QIEK…MGSK), 43–78 (YPEK…RYQD), 88–123 (YFQD…IGSD), and 124–159 (HPKE…TIRS). The Ca(2+) site is built by Asp-20, Asp-22, Asn-24, Glu-26, Glu-31, Asp-56, Asp-58, Glu-60, Lys-62, Glu-67, Asp-101, Asn-103, Asp-105, Arg-107, Glu-112, Asp-137, Asn-139, Asp-141, Tyr-143, and Glu-148.

The chain is Calcium-binding protein H (cbpH) from Dictyostelium discoideum (Social amoeba).